We begin with the raw amino-acid sequence, 340 residues long: Ferrochelatase (340 aa).

Fe cation-binding residues include His189 and Glu292.

Belongs to the ferrochelatase family.

The protein resides in the cytoplasm. The catalysed reaction is heme b + 2 H(+) = protoporphyrin IX + Fe(2+). The protein operates within porphyrin-containing compound metabolism; protoheme biosynthesis; protoheme from protoporphyrin-IX: step 1/1. Catalyzes the ferrous insertion into protoporphyrin IX. In Pseudomonas aeruginosa (strain UCBPP-PA14), this protein is Ferrochelatase.